Reading from the N-terminus, the 199-residue chain is Probable molybdenum cofactor guanylyltransferase (199 aa).

Residues 6–8, K18, D65, and D97 each bind GTP; that span reads LAG. D97 provides a ligand contact to Mg(2+).

The protein belongs to the MobA family. Mg(2+) serves as cofactor.

It localises to the cytoplasm. The enzyme catalyses Mo-molybdopterin + GTP + H(+) = Mo-molybdopterin guanine dinucleotide + diphosphate. In terms of biological role, transfers a GMP moiety from GTP to Mo-molybdopterin (Mo-MPT) cofactor (Moco or molybdenum cofactor) to form Mo-molybdopterin guanine dinucleotide (Mo-MGD) cofactor. In Staphylococcus aureus (strain Mu50 / ATCC 700699), this protein is Probable molybdenum cofactor guanylyltransferase.